Reading from the N-terminus, the 215-residue chain is 3-demethoxyubiquinol 3-hydroxylase (215 aa).

Residues glutamate 64, glutamate 94, histidine 97, glutamate 146, glutamate 178, and histidine 181 each contribute to the Fe cation site.

This sequence belongs to the COQ7 family. Fe cation is required as a cofactor.

The protein resides in the cell membrane. It catalyses the reaction a 5-methoxy-2-methyl-3-(all-trans-polyprenyl)benzene-1,4-diol + AH2 + O2 = a 3-demethylubiquinol + A + H2O. The protein operates within cofactor biosynthesis; ubiquinone biosynthesis. Catalyzes the hydroxylation of 2-nonaprenyl-3-methyl-6-methoxy-1,4-benzoquinol during ubiquinone biosynthesis. This is 3-demethoxyubiquinol 3-hydroxylase from Pseudomonas putida (strain W619).